Reading from the N-terminus, the 1073-residue chain is uncharacterized protein (1073 aa).

A signal peptide spans methionine 1 to serine 36. An N-linked (GlcNAc...) asparagine glycan is attached at asparagine 132. Alanine 392 to serine 399 lines the ATP pocket. Residues asparagine 544, asparagine 632, asparagine 703, asparagine 732, and asparagine 953 are each glycosylated (N-linked (GlcNAc...) asparagine).

This is an uncharacterized protein from Schizosaccharomyces pombe (strain 972 / ATCC 24843) (Fission yeast).